The chain runs to 137 residues: Putative pre-16S rRNA nuclease (137 aa).

This sequence belongs to the YqgF nuclease family.

Its subcellular location is the cytoplasm. In terms of biological role, could be a nuclease involved in processing of the 5'-end of pre-16S rRNA. The chain is Putative pre-16S rRNA nuclease from Clostridium botulinum (strain Eklund 17B / Type B).